Consider the following 370-residue polypeptide: tRNA N(3)-cytidine methyltransferase METTL2 (370 aa).

7 residues coordinate S-adenosyl-L-methionine: W72, Y76, G181, D206, D232, L233, and I253.

The protein belongs to the methyltransferase superfamily. METL family. As to quaternary structure, monomer.

The protein localises to the cytoplasm. It catalyses the reaction cytidine(32) in tRNA(Thr) + S-adenosyl-L-methionine = N(3)-methylcytidine(32) in tRNA(Thr) + S-adenosyl-L-homocysteine + H(+). The catalysed reaction is cytidine(32) in tRNA(Arg)(CCU) + S-adenosyl-L-methionine = N(3)-methylcytidine(32) in tRNA(Arg)(CCU) + S-adenosyl-L-homocysteine + H(+). Functionally, S-adenosyl-L-methionine-dependent methyltransferase that mediates N(3)-methylcytidine modification of residue 32 of the tRNA anticodon loop of tRNA(Thr)(UGU) and tRNA(Arg)(CCU). N(3)-methylcytidine methylation by METTL2 requires the N6-threonylcarbamoylation of tRNA (t6A37) by the EKC/KEOPS complex as prerequisite. This Gallus gallus (Chicken) protein is tRNA N(3)-cytidine methyltransferase METTL2 (METTL2).